Here is a 586-residue protein sequence, read N- to C-terminus: Kelch-like protein 7 (586 aa).

Positions 44–111 (CDVILTVQER…AYTARISVNS (68 aa)) constitute a BTB domain. The BACK domain occupies 146–248 (CLGISVLAEC…SKNFLSKTVQ (103 aa)). Kelch repeat units lie at residues 294–336 (RIAL…FWDN), 337–382 (VVYI…AAEG), 383–430 (KIYT…EANG), 431–481 (LIYV…FVKD), 483–528 (IFAV…AVGS), and 530–575 (IYVL…CVVD).

As to quaternary structure, homodimer. Component of the BCR(KLHL7) E3 ubiquitin ligase complex, at least composed of CUL3 and KLHL7 and RBX1.

Its subcellular location is the nucleus. The protein resides in the cytoplasm. Its pathway is protein modification; protein ubiquitination. Functionally, substrate-specific adapter of a BCR (BTB-CUL3-RBX1) E3 ubiquitin ligase complex. The BCR(KLHL7) complex acts by mediating ubiquitination and subsequent degradation of substrate proteins. Probably mediates 'Lys-48'-linked ubiquitination. This chain is Kelch-like protein 7 (Klhl7), found in Mus musculus (Mouse).